Consider the following 432-residue polypeptide: Glutamyl-tRNA reductase (432 aa).

Residues 50-53 (TCNR), serine 110, 115-117 (ETQ), and glutamine 121 contribute to the substrate site. The active-site Nucleophile is the cysteine 51. NADP(+) is bound at residue 190-195 (GVGEMS).

This sequence belongs to the glutamyl-tRNA reductase family. Homodimer.

It catalyses the reaction (S)-4-amino-5-oxopentanoate + tRNA(Glu) + NADP(+) = L-glutamyl-tRNA(Glu) + NADPH + H(+). It functions in the pathway porphyrin-containing compound metabolism; protoporphyrin-IX biosynthesis; 5-aminolevulinate from L-glutamyl-tRNA(Glu): step 1/2. Catalyzes the NADPH-dependent reduction of glutamyl-tRNA(Glu) to glutamate 1-semialdehyde (GSA). The chain is Glutamyl-tRNA reductase from Sulfurimonas denitrificans (strain ATCC 33889 / DSM 1251) (Thiomicrospira denitrificans (strain ATCC 33889 / DSM 1251)).